Reading from the N-terminus, the 84-residue chain is Small ribosomal subunit protein bS18 (84 aa).

This sequence belongs to the bacterial ribosomal protein bS18 family. Part of the 30S ribosomal subunit. Forms a tight heterodimer with protein bS6.

Its function is as follows. Binds as a heterodimer with protein bS6 to the central domain of the 16S rRNA, where it helps stabilize the platform of the 30S subunit. This is Small ribosomal subunit protein bS18 from Vesicomyosocius okutanii subsp. Calyptogena okutanii (strain HA).